Consider the following 275-residue polypeptide: 2,3,4,5-tetrahydropyridine-2,6-dicarboxylate N-succinyltransferase (275 aa).

It belongs to the transferase hexapeptide repeat family.

It is found in the cytoplasm. It catalyses the reaction (S)-2,3,4,5-tetrahydrodipicolinate + succinyl-CoA + H2O = (S)-2-succinylamino-6-oxoheptanedioate + CoA. It functions in the pathway amino-acid biosynthesis; L-lysine biosynthesis via DAP pathway; LL-2,6-diaminopimelate from (S)-tetrahydrodipicolinate (succinylase route): step 1/3. The sequence is that of 2,3,4,5-tetrahydropyridine-2,6-dicarboxylate N-succinyltransferase from Paraburkholderia phymatum (strain DSM 17167 / CIP 108236 / LMG 21445 / STM815) (Burkholderia phymatum).